The following is a 120-amino-acid chain: NAD(P)H-quinone oxidoreductase subunit 3, chloroplastic (120 aa).

3 consecutive transmembrane segments (helical) span residues 9-29, 64-84, and 88-108; these read IFWAFLMISSVIPILAFIISG, MFALVFVVFDVETVFLYPWAV, and VLGVSVFIEALIFVLIPVVGS.

The protein belongs to the complex I subunit 3 family. As to quaternary structure, NDH is composed of at least 16 different subunits, 5 of which are encoded in the nucleus.

Its subcellular location is the plastid. It is found in the chloroplast thylakoid membrane. It carries out the reaction a plastoquinone + NADH + (n+1) H(+)(in) = a plastoquinol + NAD(+) + n H(+)(out). It catalyses the reaction a plastoquinone + NADPH + (n+1) H(+)(in) = a plastoquinol + NADP(+) + n H(+)(out). In terms of biological role, NDH shuttles electrons from NAD(P)H:plastoquinone, via FMN and iron-sulfur (Fe-S) centers, to quinones in the photosynthetic chain and possibly in a chloroplast respiratory chain. The immediate electron acceptor for the enzyme in this species is believed to be plastoquinone. Couples the redox reaction to proton translocation, and thus conserves the redox energy in a proton gradient. The chain is NAD(P)H-quinone oxidoreductase subunit 3, chloroplastic from Nuphar advena (Common spatterdock).